Reading from the N-terminus, the 1025-residue chain is Multidrug resistance protein MdtC (1025 aa).

12 helical membrane passes run 15-35 (ILIS…LPVA), 333-353 (EVEQ…FLFL), 360-380 (LIPA…MYLC), 387-407 (LSLM…IVVL), 431-451 (VGFT…PLLL), 469-489 (VAIG…CGWL), 528-548 (LTGL…ISIP), 851-871 (AQVI…GMLY), 875-895 (VHPL…LLAL), 897-917 (IFDA…IGIV), 953-973 (PIMM…LSGG), and 984-1004 (ITIV…TPVV).

It belongs to the resistance-nodulation-cell division (RND) (TC 2.A.6) family. MdtC subfamily. In terms of assembly, part of a tripartite efflux system composed of MdtA, MdtB and MdtC. MdtC forms a heteromultimer with MdtB.

The protein resides in the cell inner membrane. The protein is Multidrug resistance protein MdtC of Klebsiella pneumoniae (strain 342).